Here is a 491-residue protein sequence, read N- to C-terminus: Protein nucleotidyltransferase YdiU (491 aa).

ATP contacts are provided by Gly88, Gly90, Arg91, Lys111, Asp123, Gly124, Arg174, and Arg181. Residue Asp250 is the Proton acceptor of the active site. Mg(2+)-binding residues include Asn251 and Asp260. Asp260 lines the ATP pocket.

It belongs to the SELO family. Requires Mg(2+) as cofactor. The cofactor is Mn(2+).

It catalyses the reaction L-seryl-[protein] + ATP = 3-O-(5'-adenylyl)-L-seryl-[protein] + diphosphate. The catalysed reaction is L-threonyl-[protein] + ATP = 3-O-(5'-adenylyl)-L-threonyl-[protein] + diphosphate. It carries out the reaction L-tyrosyl-[protein] + ATP = O-(5'-adenylyl)-L-tyrosyl-[protein] + diphosphate. The enzyme catalyses L-histidyl-[protein] + UTP = N(tele)-(5'-uridylyl)-L-histidyl-[protein] + diphosphate. It catalyses the reaction L-seryl-[protein] + UTP = O-(5'-uridylyl)-L-seryl-[protein] + diphosphate. The catalysed reaction is L-tyrosyl-[protein] + UTP = O-(5'-uridylyl)-L-tyrosyl-[protein] + diphosphate. Its function is as follows. Nucleotidyltransferase involved in the post-translational modification of proteins. It can catalyze the addition of adenosine monophosphate (AMP) or uridine monophosphate (UMP) to a protein, resulting in modifications known as AMPylation and UMPylation. The sequence is that of Protein nucleotidyltransferase YdiU from Bradyrhizobium sp. (strain BTAi1 / ATCC BAA-1182).